A 309-amino-acid chain; its full sequence is Taste receptor type 2 member 43 (309 aa).

A topological domain (extracellular) is located at residue Met-1. The chain crosses the membrane as a helical span at residues 2–22 (ITFLPIIFSSLVVVTFVIGNF). Residues 23 to 46 (ANGFIALVNSIEWFKRQKISFADQ) lie on the Cytoplasmic side of the membrane. Residues 47–67 (ILTALAVSRVGLLWVLLLNWY) traverse the membrane as a helical segment. Topologically, residues 68–86 (LTVLNPAFNSVEVRTTAYN) are extracellular. A helical transmembrane segment spans residues 87 to 107 (IWAVINHFSNWLATSLSIFYL). Residues 108–126 (LKIANFSNFIFLHLKRRVK) are Cytoplasmic-facing. A helical membrane pass occupies residues 127–147 (SVILVMLLGPLLFLACHLFMI). The Extracellular segment spans residues 148 to 178 (NMNEIVRTKEFDGNMTWKIKLKSAMYFSNMT). Asn-161 and Asn-176 each carry an N-linked (GlcNAc...) asparagine glycan. A helical membrane pass occupies residues 179–199 (VTMVANLVPFTLTLLSFLLLI). Residues 200–229 (CSLCKHLKKMQLHGKGSQDPSTKVHIKALQ) lie on the Cytoplasmic side of the membrane. A helical transmembrane segment spans residues 230–250 (TVISFLLLCAIYFLSIMISVW). Topologically, residues 251-259 (SFGSLENKP) are extracellular. The helical transmembrane segment at 260–280 (VFMFCKAIRFSYPSIHPFILI) threads the bilayer. At 281–309 (WGNKKLKQTFLSVFWQMRYWVKGEKTSSP) the chain is on the cytoplasmic side.

Belongs to the G-protein coupled receptor T2R family.

It is found in the membrane. It localises to the cell projection. Its subcellular location is the cilium membrane. Functionally, gustducin-coupled receptor immplicated in the perception of bitter compounds in the oral cavity and the gastrointestinal tract. Signals through PLCB2 and the calcium-regulated cation channel TRPM5. Activated by the sulfonyl amide sweeteners saccharin and acesulfame K. In airway epithelial cells, binding of bitter compounds increases the intracellular calcium ion concentration and stimulates ciliary beat frequency. May act as chemosensory receptors in airway epithelial cells to detect and eliminate potential noxious agents from the airways. This is Taste receptor type 2 member 43 (TAS2R43) from Pan paniscus (Pygmy chimpanzee).